Reading from the N-terminus, the 426-residue chain is Serine--tRNA ligase (426 aa).

233–235 (TAE) is an L-serine binding site. 264 to 266 (RSE) is a binding site for ATP. E287 provides a ligand contact to L-serine. ATP is bound at residue 351–354 (EISS). Residue S387 coordinates L-serine.

This sequence belongs to the class-II aminoacyl-tRNA synthetase family. Type-1 seryl-tRNA synthetase subfamily. Homodimer. The tRNA molecule binds across the dimer.

The protein localises to the cytoplasm. It catalyses the reaction tRNA(Ser) + L-serine + ATP = L-seryl-tRNA(Ser) + AMP + diphosphate + H(+). The catalysed reaction is tRNA(Sec) + L-serine + ATP = L-seryl-tRNA(Sec) + AMP + diphosphate + H(+). It participates in aminoacyl-tRNA biosynthesis; selenocysteinyl-tRNA(Sec) biosynthesis; L-seryl-tRNA(Sec) from L-serine and tRNA(Sec): step 1/1. Catalyzes the attachment of serine to tRNA(Ser). Is also able to aminoacylate tRNA(Sec) with serine, to form the misacylated tRNA L-seryl-tRNA(Sec), which will be further converted into selenocysteinyl-tRNA(Sec). This chain is Serine--tRNA ligase, found in Pseudomonas paraeruginosa (strain DSM 24068 / PA7) (Pseudomonas aeruginosa (strain PA7)).